Reading from the N-terminus, the 237-residue chain is N-(5'-phosphoribosyl)anthranilate isomerase (237 aa).

This sequence belongs to the TrpF family.

It carries out the reaction N-(5-phospho-beta-D-ribosyl)anthranilate = 1-(2-carboxyphenylamino)-1-deoxy-D-ribulose 5-phosphate. The protein operates within amino-acid biosynthesis; L-tryptophan biosynthesis; L-tryptophan from chorismate: step 3/5. The sequence is that of N-(5'-phosphoribosyl)anthranilate isomerase from Desulfitobacterium hafniense (strain Y51).